A 629-amino-acid chain; its full sequence is MALTNGRIEEYDIQNGYQNTEEIKKLPAELNFPVDFDKMPTFIFQEERQKLDLPLSDSEENQFHDFSDSKLSLGFEIGRSKEKFVDEKPFYSNKEPLKINSWKKSSSHPKSKEVSNGLLKVSTPPTEFVKRENAGIRRRSSNQGSFALEAPKILKRDAMFKESWKNKCFISPQKDNQGFSKSKHLSTYEGETENGFSTSTEEEEEEEEDIVSASWVDNLDMDMASFNSHRERFLTEHVNMDERSDDDFLLGLISSDSSVDDHDNEQDDVDLIGWECFFDDSSDELNTLSHQADDEGDTTDEETPELQNNKLLNLSTPKKSFGQTPRIKTELSESPNSQRTLLSAVPTPLELSAELAYKEDLTSLASRANISDNSTGLTPTLAKATLAQPVSTVVSVASFELDPRLNITQPKPPVMGTWAKEPNHLIGIIDGKHSHSLHHDKFDACTKGENTANNGYGPQTLNETSEEPSLDDILDTSLLQPSTQTDLQEENSVSFAQEDNSLSRWEKIPIGTFRKNQYIKSMARRDELIRDEWFTLAIKTREKRRHKINATGMTTTNSVPLRPKSRKARRALKKKARKMTFRQMHSDFQSALEDEHNDGSYLDNDYETVGLGLGPELSPLFEILESSGY.

Disordered regions lie at residues 101–126 (SWKK…TPPT), 172–209 (PQKD…EEED), 315–339 (STPK…NSQR), and 448–468 (GENT…SEEP). Residues 200–209 (TEEEEEEEED) are compositionally biased toward acidic residues. Position 334 is a phosphoserine (Ser334). Over residues 448–463 (GENTANNGYGPQTLNE) the composition is skewed to polar residues.

This is an uncharacterized protein from Schizosaccharomyces pombe (strain 972 / ATCC 24843) (Fission yeast).